The primary structure comprises 399 residues: Elongation factor Tu (399 aa).

In terms of domain architecture, tr-type G spans 10 to 209 (KPHVNIGTIG…DVDEYIPTPV (200 aa)). The tract at residues 19 to 26 (GHVDHGKT) is G1. 19 to 26 (GHVDHGKT) is a binding site for GTP. Threonine 26 contributes to the Mg(2+) binding site. Residues 62 to 66 (GITIN) form a G2 region. The tract at residues 83-86 (DCPG) is G3. GTP is bound by residues 83–87 (DCPGH) and 138–141 (NKCD). Residues 138-141 (NKCD) are G4. Residues 175-177 (SAY) form a G5 region.

Belongs to the TRAFAC class translation factor GTPase superfamily. Classic translation factor GTPase family. EF-Tu/EF-1A subfamily. As to quaternary structure, monomer.

The protein resides in the cytoplasm. It catalyses the reaction GTP + H2O = GDP + phosphate + H(+). In terms of biological role, GTP hydrolase that promotes the GTP-dependent binding of aminoacyl-tRNA to the A-site of ribosomes during protein biosynthesis. In Bifidobacterium animalis subsp. lactis (strain AD011), this protein is Elongation factor Tu.